The sequence spans 693 residues: DNA ligase (693 aa).

Residues 43 to 47, 92 to 93, and E123 each bind NAD(+); these read DEEYD and SL. K125 serves as the catalytic N6-AMP-lysine intermediate. 4 residues coordinate NAD(+): R146, E180, K296, and K320. Positions 414, 417, 433, and 438 each coordinate Zn(2+). The region spanning 595–684 is the BRCT domain; that stretch reads VKYDVLKGLT…AKLKGYNFDE (90 aa).

Belongs to the NAD-dependent DNA ligase family. LigA subfamily. Mg(2+) serves as cofactor. Requires Mn(2+) as cofactor.

The catalysed reaction is NAD(+) + (deoxyribonucleotide)n-3'-hydroxyl + 5'-phospho-(deoxyribonucleotide)m = (deoxyribonucleotide)n+m + AMP + beta-nicotinamide D-nucleotide.. Functionally, DNA ligase that catalyzes the formation of phosphodiester linkages between 5'-phosphoryl and 3'-hydroxyl groups in double-stranded DNA using NAD as a coenzyme and as the energy source for the reaction. It is essential for DNA replication and repair of damaged DNA. This is DNA ligase from Thermotoga neapolitana (strain ATCC 49049 / DSM 4359 / NBRC 107923 / NS-E).